The following is a 92-amino-acid chain: Small ribosomal subunit protein uS19 (92 aa).

This sequence belongs to the universal ribosomal protein uS19 family.

Functionally, protein S19 forms a complex with S13 that binds strongly to the 16S ribosomal RNA. The sequence is that of Small ribosomal subunit protein uS19 from Rhizobium etli (strain CIAT 652).